The chain runs to 369 residues: MELVAGCYEQILFGFAARPGEPWTVTPDFTHHAHTASLSAVAVNSKYVVTGSRDESIQIYDMRKKVEHGALLQHNGTITCLEFYGTAHLLSGAEDGLICIWNTKRWECLKSIKAHKGHVTSLSIHPSGKLALSVGTDKTLRTWNLVEGRSAFIKNLKQNAHIIKWSPDGEKYVTVITNKVDIYKLDTASITGTITIEKRISSIRFITDSVLAIAGDDEIIRFYSCDSQKCLCEFKARENRIKDIYSFEREGQHVIVTASSDGYIKVWNLDLNKINNVPSLLCEVSTKARLTCLAVWLDQASEMKENCGKAATSTEANESEKPSAVKKKKVCGMNKSGKLTKQRRRIVPAKRKLEAPLQKKKKKKQNSSE.

WD repeat units follow at residues 33–70 (AHTASLSAVAVNSKYVVTGSRDESIQIYDMRKKVEHGA), 73–111 (QHNGTITCLEFYGTAHLLSGAEDGLICIWNTKRWECLKS), 114–153 (AHKGHVTSLSIHPSGKLALSVGTDKTLRTWNLVEGRSAFI), 195–233 (TIEKRISSIRFITDSVLAIAGDDEIIRFYSCDSQKCLCE), and 236–278 (AREN…NNVP). Positions 311 to 369 (ATSTEANESEKPSAVKKKKVCGMNKSGKLTKQRRRIVPAKRKLEAPLQKKKKKKQNSSE) are disordered. Composition is skewed to basic residues over residues 338–350 (KLTKQRRRIVPAK) and 358–369 (QKKKKKKQNSSE).

Its subcellular location is the nucleus. The protein resides in the nucleolus. Functionally, negatively regulates the PAK1 kinase. PAK1 is a member of the PAK kinase family, which has been shown to play a positive role in the regulation of signaling pathways involving MAPK8 and RELA. PAK1 exists as an inactive homodimer, which is activated by binding of small GTPases such as CDC42 to an N-terminal regulatory domain. PAK1IP1 also binds to the N-terminus of PAK1, and inhibits the specific activation of PAK1 by CDC42. May be involved in ribosomal large subunit assembly. The protein is p21-activated protein kinase-interacting protein 1-like (PAK1IP1) of Gallus gallus (Chicken).